A 393-amino-acid chain; its full sequence is GDP-4-keto-6-deoxy-D-mannose 3-dehydratase (393 aa).

30–33 is a GDP-4-dehydro-alpha-D-rhamnose binding site; that stretch reads NMFT. A helical transmembrane segment spans residues 53–73; the sequence is YSVMVSSGSTANLLMIAALFF. Pyridoxal 5'-phosphate-binding positions include 60–61, tryptophan 92, glutamate 166, and serine 187; that span reads GS. Histidine 192 (proton donor/acceptor) is an active-site residue. Histidine 219 is a binding site for L-glutamate. Arginine 223 lines the GDP-4-dehydro-alpha-D-rhamnose pocket. Asparagine 252 is a binding site for pyridoxal 5'-phosphate. Residue arginine 254 participates in L-glutamate binding. Glutamate 333 is a binding site for GDP-4-dehydro-alpha-D-rhamnose.

Belongs to the DegT/DnrJ/EryC1 family. Homodimer. Pyridoxal 5'-phosphate is required as a cofactor.

It localises to the cell membrane. It carries out the reaction GDP-4-dehydro-alpha-D-rhamnose + L-glutamate = GDP-4-dehydro-3,6-dideoxy-alpha-D-mannose + 2-oxoglutarate + NH4(+). It functions in the pathway nucleotide-sugar metabolism; GDP-L-colitose biosynthesis. Functionally, involved in the biosynthesis of L-colitose, a 3,6-dideoxyhexose present in the O-antigen region of lipopolysaccharides (LPS), where it serves as an antigenic determinant and is vital for bacterial defense and survival. Catalyzes the removal of the C3'-hydroxyl group from GDP-4-keto-6-deoxy-D-mannose via a combined transamination-deoxygenation reaction. The catalysis is initiated by a transamination step in which pyridoxal 5'-phosphate (PLP) is converted to pyridoxamine 5'-phosphate (PMP) in the presence of L-glutamate. This coenzyme then forms a Schiff base with GDP-4-keto-6-deoxy-D-mannose and the resulting adduct undergoes a PMP-mediated beta-dehydration reaction to give a sugar enamine intermediate, which after tautomerization and hydrolysis to release ammonia yields GDP-4-keto-3,6-dideoxy-D-mannose as a product. This Yersinia pseudotuberculosis protein is GDP-4-keto-6-deoxy-D-mannose 3-dehydratase.